Here is a 198-residue protein sequence, read N- to C-terminus: NAD(P)H quinone oxidoreductase PST1 (198 aa).

Residues 6–192 enclose the Flavodoxin-like domain; that stretch reads VAIIIYSLYH…AIAKQQGEDF (187 aa). FMN-binding positions include 12–16 and 112–164; these read SLYHH and VFVW…SPWG.

This sequence belongs to the WrbA family. FMN is required as a cofactor.

The protein localises to the cell membrane. The catalysed reaction is a quinone + NADH + H(+) = a quinol + NAD(+). It carries out the reaction a quinone + NADPH + H(+) = a quinol + NADP(+). Its function is as follows. Flavodoxin-like protein (FLP) that plays a role in cell wall integrity, oxidative stress protection and virulence. FLPs act as NAD(P)H quinone oxidoreductases. Reduces ubiquinone (coenzyme Q), enabling it to serve as an antioxidant in the membrane. The polypeptide is NAD(P)H quinone oxidoreductase PST1 (Candida albicans (strain SC5314 / ATCC MYA-2876) (Yeast)).